Here is a 697-residue protein sequence, read N- to C-terminus: MLNPIVHRFQYGKHIVILETGIVARQATAAVMVNMADTIVLVTVVGVKQVKPGQKFFPLMVNYQERTYAAGRFPGGFFRREGRPSEGEILISRMIDRPLRPLFPDGFLNEVQVIATVVSINPQVSPDIVAMIGVSAALSISGIPFNCPFGAARVGYINNQYVLNPTIAELVDSSLDLVVASTANAVLMVESEAKQLSEEQMLSAIIFGHEQQQLVIQNINHMVTIVGKPKWSWQAQVIDTNLQLCVTELAESRLNEAFCISDKQERDVCIETIKSDVLSALQQKNETIEEETISNIFANLEKQIARNRILGGKLRIDGRNHKMIRSLDMRTSILPRTHGSALFVRGETQALVTVTLGTERNAQNIDELIGERTDRFLLHYNFPPYCVGEIGLVGSPKRREIGHGRLAKRGILAVMPTANEFPYTVRVVSEITESNGSSSMASVCGTSLALMDAGVPIKAAVAGVAMGLIKEDNNFVILSDILSNEDYIGDMDFKVAGSKNGITALQMDIKTKGITNNIIQLALNQAKDARMHILNMMEQVISMSRTDISPFAPRIHTIKIHPDKIKDVIGKCGSVIRALTEETKTIIDIEDDGTVTVAATDSIKAQQAICRIKDITAEIEVGSIYHGKVTRIVDFGAFIAISSNKEGLVHISQITNKRVEKVADYLSIDQIVLVKVLEVDRQGRIRLSMKDTNLTNK.

Positions 486 and 492 each coordinate Mg(2+). The KH domain maps to 553-612 (PRIHTIKIHPDKIKDVIGKCGSVIRALTEETKTIIDIEDDGTVTVAATDSIKAQQAICRI). The S1 motif domain maps to 622-690 (GSIYHGKVTR…RQGRIRLSMK (69 aa)).

It belongs to the polyribonucleotide nucleotidyltransferase family. Component of the RNA degradosome, which is a multiprotein complex involved in RNA processing and mRNA degradation. It depends on Mg(2+) as a cofactor.

Its subcellular location is the cytoplasm. The catalysed reaction is RNA(n+1) + phosphate = RNA(n) + a ribonucleoside 5'-diphosphate. Functionally, involved in mRNA degradation. Catalyzes the phosphorolysis of single-stranded polyribonucleotides processively in the 3'- to 5'-direction. This Baumannia cicadellinicola subsp. Homalodisca coagulata protein is Polyribonucleotide nucleotidyltransferase.